The following is an 83-amino-acid chain: Cytochrome b559 subunit alpha (83 aa).

The helical transmembrane segment at 21–35 (VIHSITIPSLFIAGW) threads the bilayer. Position 23 (His-23) interacts with heme.

Belongs to the PsbE/PsbF family. As to quaternary structure, heterodimer of an alpha subunit and a beta subunit. PSII is composed of 1 copy each of membrane proteins PsbA, PsbB, PsbC, PsbD, PsbE, PsbF, PsbH, PsbI, PsbJ, PsbK, PsbL, PsbM, PsbT, PsbX, PsbY, PsbZ, Psb30/Ycf12, at least 3 peripheral proteins of the oxygen-evolving complex and a large number of cofactors. It forms dimeric complexes. Requires heme b as cofactor.

It localises to the plastid. It is found in the chloroplast thylakoid membrane. This b-type cytochrome is tightly associated with the reaction center of photosystem II (PSII). PSII is a light-driven water:plastoquinone oxidoreductase that uses light energy to abstract electrons from H(2)O, generating O(2) and a proton gradient subsequently used for ATP formation. It consists of a core antenna complex that captures photons, and an electron transfer chain that converts photonic excitation into a charge separation. This is Cytochrome b559 subunit alpha from Physcomitrium patens (Spreading-leaved earth moss).